We begin with the raw amino-acid sequence, 672 residues long: 2,4-dienoyl-CoA reductase [(2E)-enoyl-CoA-producing] (672 aa).

Residues 25–27, G59, and Q101 contribute to the FMN site; that span reads SMH. Catalysis depends on Y167, which acts as the Proton donor. Position 176 (R176) interacts with substrate. R215 contacts FMN. 253-256 contacts substrate; it reads HEAR. Residues R289 and 311-312 contribute to the FMN site; that span reads AR. [4Fe-4S] cluster is bound by residues C335 and C338. Q340 is a binding site for FAD. An NADP(+)-binding site is contributed by Q340. Residues C342 and C354 each contribute to the [4Fe-4S] cluster site. FAD contacts are provided by A385, D404, Q412, K422, and V449. An NADP(+)-binding site is contributed by 563–564; that stretch reads RK. Substrate is bound by residues K567 and W578. FAD-binding positions include G649 and 656–658; that span reads LDA. 654-656 provides a ligand contact to NADP(+); that stretch reads MEL.

The protein in the N-terminal section; belongs to the NADH:flavin oxidoreductase/NADH oxidase family. Monomer. Requires FMN as cofactor. FAD is required as a cofactor. The cofactor is [4Fe-4S] cluster.

It catalyses the reaction a 4,5-saturated-(2E)-enoyl-CoA + NADP(+) = a (2E,4E)-dienoyl-CoA + NADPH + H(+). The catalysed reaction is a (2E,4Z)-dienoyl-CoA + NADPH + H(+) = a 4,5-saturated-(2E)-enoyl-CoA + NADP(+). It carries out the reaction (2E)-decenoyl-CoA + NADP(+) = (2E,4E)-decadienoyl-CoA + NADPH + H(+). The enzyme catalyses (2E)-decenoyl-CoA + NADP(+) = (2E,4Z)-decadienoyl-CoA + NADPH + H(+). The protein operates within lipid metabolism; fatty acid beta-oxidation. With respect to regulation, is non-competitively inhibited by NADH. Functionally, functions as an auxiliary enzyme in the beta-oxidation of unsaturated fatty acids with double bonds at even carbon positions. Catalyzes the NADPH-dependent reduction of the C4-C5 double bond of the acyl chain of 2,4-dienoyl-CoA to yield 2-trans-enoyl-CoA. Acts on both isomers, 2-trans,4-cis- and 2-trans,4-trans-decadienoyl-CoA, with almost equal efficiency. Is not active with NADH instead of NADPH. Does not show cis-&gt;trans isomerase activity. The sequence is that of 2,4-dienoyl-CoA reductase [(2E)-enoyl-CoA-producing] from Escherichia coli (strain K12).